A 400-amino-acid chain; its full sequence is Phosphoglycerate kinase (400 aa).

Substrate contacts are provided by residues 22–24 (DFN), Arg-38, 61–64 (HLGR), Arg-119, and Arg-152. Residues Lys-205, Gly-296, Glu-327, and 353-356 (GGDT) each bind ATP.

It belongs to the phosphoglycerate kinase family. In terms of assembly, monomer.

The protein localises to the cytoplasm. It catalyses the reaction (2R)-3-phosphoglycerate + ATP = (2R)-3-phospho-glyceroyl phosphate + ADP. The protein operates within carbohydrate degradation; glycolysis; pyruvate from D-glyceraldehyde 3-phosphate: step 2/5. The sequence is that of Phosphoglycerate kinase from Campylobacter jejuni subsp. jejuni serotype O:6 (strain 81116 / NCTC 11828).